The chain runs to 230 residues: 7-cyano-7-deazaguanine synthase (230 aa).

F8–L18 serves as a coordination point for ATP. Residues C187, C196, C199, and C202 each coordinate Zn(2+).

The protein belongs to the QueC family. Zn(2+) is required as a cofactor.

It catalyses the reaction 7-carboxy-7-deazaguanine + NH4(+) + ATP = 7-cyano-7-deazaguanine + ADP + phosphate + H2O + H(+). It participates in purine metabolism; 7-cyano-7-deazaguanine biosynthesis. In terms of biological role, catalyzes the ATP-dependent conversion of 7-carboxy-7-deazaguanine (CDG) to 7-cyano-7-deazaguanine (preQ(0)). The sequence is that of 7-cyano-7-deazaguanine synthase from Shewanella amazonensis (strain ATCC BAA-1098 / SB2B).